The chain runs to 132 residues: Hemoglobin subunit beta-1 (132 aa).

One can recognise a Globin domain in the interval 1-132 (WSKIDIDVCG…VVSALGRQYH (132 aa)). Positions 49 and 78 each coordinate heme b.

It belongs to the globin family. Hb 1 is a heterotetramer of two alpha-1 and two beta-1 chains. Hb 2 is a heterotetramer of two alpha-2 and two beta-1 chains. In terms of tissue distribution, red blood cells.

Its function is as follows. Involved in oxygen transport from gills to the various peripheral tissues. This Arctogadus glacialis (Arctic cod) protein is Hemoglobin subunit beta-1 (hbb1).